Reading from the N-terminus, the 315-residue chain is Mycothiol acetyltransferase (315 aa).

2 N-acetyltransferase domains span residues 8 to 145 and 163 to 315; these read VETS…LPLD and VSLR…DATA. Glutamate 39 provides a ligand contact to 1D-myo-inositol 2-(L-cysteinylamino)-2-deoxy-alpha-D-glucopyranoside. Acetyl-CoA is bound by residues 81 to 83 and 89 to 94; these read LVV and HHGVGT. The 1D-myo-inositol 2-(L-cysteinylamino)-2-deoxy-alpha-D-glucopyranoside site is built by glutamate 190, lysine 229, and glutamate 243. 247–249 serves as a coordination point for acetyl-CoA; that stretch reads LGV. Tyrosine 281 is a 1D-myo-inositol 2-(L-cysteinylamino)-2-deoxy-alpha-D-glucopyranoside binding site. 286-291 serves as a coordination point for acetyl-CoA; it reads NTVAIR.

It belongs to the acetyltransferase family. MshD subfamily. In terms of assembly, monomer.

It carries out the reaction 1D-myo-inositol 2-(L-cysteinylamino)-2-deoxy-alpha-D-glucopyranoside + acetyl-CoA = mycothiol + CoA + H(+). Catalyzes the transfer of acetyl from acetyl-CoA to desacetylmycothiol (Cys-GlcN-Ins) to form mycothiol. This is Mycothiol acetyltransferase from Sanguibacter keddieii (strain ATCC 51767 / DSM 10542 / NCFB 3025 / ST-74).